A 100-amino-acid chain; its full sequence is Aspartyl/glutamyl-tRNA(Asn/Gln) amidotransferase subunit C (100 aa).

Belongs to the GatC family. In terms of assembly, heterotrimer of A, B and C subunits.

It catalyses the reaction L-glutamyl-tRNA(Gln) + L-glutamine + ATP + H2O = L-glutaminyl-tRNA(Gln) + L-glutamate + ADP + phosphate + H(+). It carries out the reaction L-aspartyl-tRNA(Asn) + L-glutamine + ATP + H2O = L-asparaginyl-tRNA(Asn) + L-glutamate + ADP + phosphate + 2 H(+). Allows the formation of correctly charged Asn-tRNA(Asn) or Gln-tRNA(Gln) through the transamidation of misacylated Asp-tRNA(Asn) or Glu-tRNA(Gln) in organisms which lack either or both of asparaginyl-tRNA or glutaminyl-tRNA synthetases. The reaction takes place in the presence of glutamine and ATP through an activated phospho-Asp-tRNA(Asn) or phospho-Glu-tRNA(Gln). The chain is Aspartyl/glutamyl-tRNA(Asn/Gln) amidotransferase subunit C from Rickettsia bellii (strain RML369-C).